Here is a 242-residue protein sequence, read N- to C-terminus: uncharacterized protein (242 aa).

This sequence to E.coli MazG and to plasmid pIP1100 erythromycin esterase.

This is an uncharacterized protein from Streptomyces cacaoi.